Reading from the N-terminus, the 151-residue chain is SsrA-binding protein (151 aa).

Belongs to the SmpB family.

It localises to the cytoplasm. Required for rescue of stalled ribosomes mediated by trans-translation. Binds to transfer-messenger RNA (tmRNA), required for stable association of tmRNA with ribosomes. tmRNA and SmpB together mimic tRNA shape, replacing the anticodon stem-loop with SmpB. tmRNA is encoded by the ssrA gene; the 2 termini fold to resemble tRNA(Ala) and it encodes a 'tag peptide', a short internal open reading frame. During trans-translation Ala-aminoacylated tmRNA acts like a tRNA, entering the A-site of stalled ribosomes, displacing the stalled mRNA. The ribosome then switches to translate the ORF on the tmRNA; the nascent peptide is terminated with the 'tag peptide' encoded by the tmRNA and targeted for degradation. The ribosome is freed to recommence translation, which seems to be the essential function of trans-translation. The polypeptide is SsrA-binding protein (Lactobacillus acidophilus (strain ATCC 700396 / NCK56 / N2 / NCFM)).